The chain runs to 241 residues: Zinc finger CCHC domain-containing protein 24 (241 aa).

2 positions are modified to phosphoserine: S65 and S93. A CCHC-type zinc finger spans residues 132 to 149; sequence YLCHLCFNKGHYIKDCPQ.

This is Zinc finger CCHC domain-containing protein 24 from Mus musculus (Mouse).